A 365-amino-acid polypeptide reads, in one-letter code: Protein-glutamate methylesterase/protein-glutamine glutaminase 2 (365 aa).

Residues 6 to 123 (RVLIIDDSAS…ADSLSDDAMR (118 aa)) enclose the Response regulatory domain. D57 is subject to 4-aspartylphosphate. The region spanning 173 to 359 (AKTTEMVVCV…PLDQIAREVL (187 aa)) is the CheB-type methylesterase domain. Residues S185, H211, and D307 contribute to the active site.

The protein belongs to the CheB family. Phosphorylated by CheA. Phosphorylation of the N-terminal regulatory domain activates the methylesterase activity.

The protein resides in the cytoplasm. It catalyses the reaction [protein]-L-glutamate 5-O-methyl ester + H2O = L-glutamyl-[protein] + methanol + H(+). The enzyme catalyses L-glutaminyl-[protein] + H2O = L-glutamyl-[protein] + NH4(+). In terms of biological role, involved in chemotaxis. Part of a chemotaxis signal transduction system that modulates chemotaxis in response to various stimuli. Catalyzes the demethylation of specific methylglutamate residues introduced into the chemoreceptors (methyl-accepting chemotaxis proteins or MCP) by CheR. Also mediates the irreversible deamidation of specific glutamine residues to glutamic acid. This is Protein-glutamate methylesterase/protein-glutamine glutaminase 2 from Rhizobium johnstonii (strain DSM 114642 / LMG 32736 / 3841) (Rhizobium leguminosarum bv. viciae).